The primary structure comprises 246 residues: tRNA1(Val) (adenine(37)-N6)-methyltransferase (246 aa).

This sequence belongs to the methyltransferase superfamily. tRNA (adenine-N(6)-)-methyltransferase family.

It localises to the cytoplasm. It carries out the reaction adenosine(37) in tRNA1(Val) + S-adenosyl-L-methionine = N(6)-methyladenosine(37) in tRNA1(Val) + S-adenosyl-L-homocysteine + H(+). Its function is as follows. Specifically methylates the adenine in position 37 of tRNA(1)(Val) (anticodon cmo5UAC). The sequence is that of tRNA1(Val) (adenine(37)-N6)-methyltransferase from Shewanella halifaxensis (strain HAW-EB4).